The sequence spans 130 residues: Small ribosomal subunit protein uS9 (130 aa).

The protein belongs to the universal ribosomal protein uS9 family.

The sequence is that of Small ribosomal subunit protein uS9 from Pseudomonas putida (strain ATCC 700007 / DSM 6899 / JCM 31910 / BCRC 17059 / LMG 24140 / F1).